Reading from the N-terminus, the 109-residue chain is MEICKRVEQVDFEKMNGLIPTIVQDYKTKEVLMLAYMSKESLNKTLEDNTTWFYSRSRDELWNKGATSGHFQYVKEIKIDCDNDTILILAEQVGAACHTGNRTCFYRDL.

A Mg(2+)-binding site is contributed by Asp-80. Cys-81 provides a ligand contact to Zn(2+). Mg(2+) is bound by residues Asp-82 and Asp-84. Cys-97 and Cys-104 together coordinate Zn(2+).

It belongs to the PRA-CH family. As to quaternary structure, homodimer. Mg(2+) serves as cofactor. It depends on Zn(2+) as a cofactor.

It is found in the cytoplasm. The catalysed reaction is 1-(5-phospho-beta-D-ribosyl)-5'-AMP + H2O = 1-(5-phospho-beta-D-ribosyl)-5-[(5-phospho-beta-D-ribosylamino)methylideneamino]imidazole-4-carboxamide. It participates in amino-acid biosynthesis; L-histidine biosynthesis; L-histidine from 5-phospho-alpha-D-ribose 1-diphosphate: step 3/9. In terms of biological role, catalyzes the hydrolysis of the adenine ring of phosphoribosyl-AMP. The sequence is that of Phosphoribosyl-AMP cyclohydrolase from Clostridium beijerinckii (strain ATCC 51743 / NCIMB 8052) (Clostridium acetobutylicum).